The primary structure comprises 255 residues: 5-oxoprolinase subunit A (255 aa).

This sequence belongs to the LamB/PxpA family. In terms of assembly, forms a complex composed of PxpA, PxpB and PxpC.

It carries out the reaction 5-oxo-L-proline + ATP + 2 H2O = L-glutamate + ADP + phosphate + H(+). Its function is as follows. Catalyzes the cleavage of 5-oxoproline to form L-glutamate coupled to the hydrolysis of ATP to ADP and inorganic phosphate. The polypeptide is 5-oxoprolinase subunit A (Nitrobacter winogradskyi (strain ATCC 25391 / DSM 10237 / CIP 104748 / NCIMB 11846 / Nb-255)).